Reading from the N-terminus, the 238-residue chain is Probable transcriptional regulatory protein YcdB (238 aa).

This sequence belongs to the TACO1 family. YeeN subfamily.

It localises to the cytoplasm. The chain is Probable transcriptional regulatory protein YcdB (ycdB) from Lactococcus lactis subsp. lactis (strain IL1403) (Streptococcus lactis).